A 497-amino-acid polypeptide reads, in one-letter code: NADH-ubiquinone oxidoreductase chain 4 (497 aa).

A run of 14 helical transmembrane segments spans residues 3–23 (FLLY…LLII), 42–62 (LFFS…SDNI), 94–114 (ISLL…LISW), 122–142 (NSFI…FCVL), 144–164 (LVFF…LIGV), 178–198 (LFFY…VIYS), 220–240 (ILWA…PFHI), 250–270 (PTVG…YGLL), 276–296 (IFCD…LLGI), 313–333 (IAYA…TSNI), 340–360 (VFLM…IGCV), 374–394 (GLVS…LSNI), 418–438 (FAAL…IWLY), and 463–483 (VVGF…SYII).

The protein belongs to the complex I subunit 4 family.

The protein resides in the mitochondrion membrane. It carries out the reaction a ubiquinone + NADH + 5 H(+)(in) = a ubiquinol + NAD(+) + 4 H(+)(out). Functionally, core subunit of the mitochondrial membrane respiratory chain NADH dehydrogenase (Complex I) that is believed to belong to the minimal assembly required for catalysis. Complex I functions in the transfer of electrons from NADH to the respiratory chain. The immediate electron acceptor for the enzyme is believed to be ubiquinone. The polypeptide is NADH-ubiquinone oxidoreductase chain 4 (ND4) (Acanthamoeba castellanii (Amoeba)).